The following is a 389-amino-acid chain: Geodin cluster transcriptional coactivator gedD (389 aa).

An HTH iclR-type domain is found at 13-83 (LAWHVQLLAC…QPGQIMHTPL (71 aa)). Positions 43–62 (VRDLAQLCGVSETTLSRVVR) form a DNA-binding region, H-T-H motif.

The protein resides in the nucleus. Transcriptional coactivator; part of the gene cluster that mediates the biosynthesis of geodin, an intermediate in the biosynthesis of other natural products. With gedR, coregulates the production of geodin. This is Geodin cluster transcriptional coactivator gedD (gedD) from Aspergillus terreus (strain NIH 2624 / FGSC A1156).